The following is a 232-amino-acid chain: 2,3,4,5-tetrahydropyridine-2,6-dicarboxylate N-acetyltransferase (232 aa).

The protein belongs to the transferase hexapeptide repeat family. DapH subfamily.

It catalyses the reaction (S)-2,3,4,5-tetrahydrodipicolinate + acetyl-CoA + H2O = L-2-acetamido-6-oxoheptanedioate + CoA. The protein operates within amino-acid biosynthesis; L-lysine biosynthesis via DAP pathway; LL-2,6-diaminopimelate from (S)-tetrahydrodipicolinate (acetylase route): step 1/3. Catalyzes the transfer of an acetyl group from acetyl-CoA to tetrahydrodipicolinate. In Streptococcus suis (strain 98HAH33), this protein is 2,3,4,5-tetrahydropyridine-2,6-dicarboxylate N-acetyltransferase.